A 1135-amino-acid chain; its full sequence is DNA-directed RNA polymerase subunit beta' (1135 aa).

4 residues coordinate Zn(2+): Cys-60, Cys-62, Cys-75, and Cys-78. Residues Asp-450, Asp-452, and Asp-454 each coordinate Mg(2+). 4 residues coordinate Zn(2+): Cys-795, Cys-869, Cys-876, and Cys-879.

The protein belongs to the RNA polymerase beta' chain family. In terms of assembly, the RNAP catalytic core consists of 2 alpha, 1 beta, 1 beta' and 1 omega subunit. When a sigma factor is associated with the core the holoenzyme is formed, which can initiate transcription. Mg(2+) is required as a cofactor. The cofactor is Zn(2+).

It carries out the reaction RNA(n) + a ribonucleoside 5'-triphosphate = RNA(n+1) + diphosphate. Functionally, DNA-dependent RNA polymerase catalyzes the transcription of DNA into RNA using the four ribonucleoside triphosphates as substrates. In Clostridium tetani (strain Massachusetts / E88), this protein is DNA-directed RNA polymerase subunit beta'.